Here is a 308-residue protein sequence, read N- to C-terminus: Testis-specific Y-encoded protein 8 (308 aa).

Belongs to the nucleosome assembly protein (NAP) family.

The protein resides in the cytoplasm. It is found in the nucleus. In terms of biological role, may be involved in sperm differentiation and proliferation. This is Testis-specific Y-encoded protein 8 (TSPY8) from Homo sapiens (Human).